A 109-amino-acid polypeptide reads, in one-letter code: ATP-dependent Clp protease adapter protein ClpS (109 aa).

The segment at 1–20 is disordered; the sequence is MAERKQGGQGNGVGSSVVTE.

The protein belongs to the ClpS family. Binds to the N-terminal domain of the chaperone ClpA.

In terms of biological role, involved in the modulation of the specificity of the ClpAP-mediated ATP-dependent protein degradation. This chain is ATP-dependent Clp protease adapter protein ClpS, found in Caulobacter vibrioides (strain NA1000 / CB15N) (Caulobacter crescentus).